Consider the following 708-residue polypeptide: MGIEGVSTYLKSGNMDTISAPPGFVSQTSFVLRNVPRDKESPRSVSRQEQTTGFGTDDKDSCNMFLKSRPWIVHGHTIPSSEALRPKKTEVRRRRPLKVSETKVLEEAPVFNPTEEEFRDTLSYISSLRDRAEPYGICCVVPPPSWKPPCLLKEKQIWEASTFFPQVQLFGIQTENRKIKKEVDADSNDAASEGVQLCRVERGPGYTLKSFKNFADTYKKSHFGMKDEVLGSENSSPSLKPNELIVADIEKEYRQIVESPLIEIGVLYGNDLDTATFGSGFPLSAPSESSKYSSGWNLNSTAKLPGSLLSLEDCESVCVPRLSVGMCLSSQFWKSEKERLYSLCYLHVGAPRVWYSVAGCHRSKFKAAMKSFILEMSGEQPKKSHNPVMMMSPYQLSVEGIPVTRCVQHPGQYVIIFPGSYYSAFDCGFNCLEKANFAPLDWLPHGDIAVQVNQEMSKTSLISYDKLLFSAAREAVKCLKEYGLSKKNTACYTRWNDSCGTDGLFSNIIKSRIKLEKNRREFLISSLESQRMDKSYDAVNKRECCVCLGDLYLSAVNCSCSANRYSCLNHMRKLCACPCDRKSFLYRYTMDELNLLVEALEGKKLSSMFRWAGIDQKFCASPATTSSKPEEDKGKETDEVTPCNITRKDVAAGTKDQTRVKARSLADILNVKDGNNDAKETLESCSKKSNRPCDNDSSEANAPKKQKQ.

Positions Val35–Lys59 are disordered. Positions Arg43–Phe54 are enriched in polar residues. The JmjN domain occupies Ala108–Pro149. The 162-residue stretch at Ser293 to Gln454 folds into the JmjC domain. The Zn(2+) site is built by Cys544, Cys547, Cys558, Cys560, Cys567, His570, Cys575, and Cys577. An RING-type; degenerate zinc finger spans residues Cys544–Arg581. Positions Thr646–Gly653 match the Nuclear localization signal motif. Residues Ala678 to Asp694 are compositionally biased toward basic and acidic residues. Positions Ala678 to Gln708 are disordered.

Belongs to the JARID1 histone demethylase family. In terms of tissue distribution, expressed in inflorescences, roots, siliques, leaves and stems.

The protein resides in the nucleus. The protein is Probable inactive lysine-specific demethylase JMJ19 of Arabidopsis thaliana (Mouse-ear cress).